The primary structure comprises 569 residues: Estrogen receptor (569 aa).

The tract at residues 1 to 151 is modulating; that stretch reads MYPKEEHSAG…GFDSGKETRF (151 aa). Polar residues predominate over residues 28 to 37; sequence PTQTFGTSSP. The segment at 28–65 is disordered; sequence PTQTFGTSSPAEPASVGYYPAPPDPHEEHLQTLGGGSS. 2 consecutive NR C4-type zinc fingers follow at residues 152-172 and 188-212; these read CAVC…CEGC and CPAT…LRKC. A DNA-binding region (nuclear receptor) is located at residues 152–217; sequence CAVCSDYASG…RLRKCYEVGM (66 aa). Residues 218–278 are hinge; it reads MKGGIRKDRG…SGGVVSTLCM (61 aa). Residues 223–271 form a disordered region; sequence RKDRGGRSVRRERRRSSNEDRDKSSSDQCSRAGVRTTGPQDKRKKRSGG. The segment covering 237–247 has biased composition (basic and acidic residues); sequence RSSNEDRDKSS. The region spanning 279-515 is the NR LBD domain; the sequence is SPDQVLLLLL…DLLLEMLDAQ (237 aa). The span at 523 to 532 shows a compositional bias: polar residues; the sequence is VQRVWSQSEK. The interval 523–569 is disordered; the sequence is VQRVWSQSEKNPPSTPTTSSSSSNNSPRGGAAAIQSNGACHSHSPDP. Residues 538–549 are compositionally biased toward low complexity; it reads PTTSSSSSNNSP.

It belongs to the nuclear hormone receptor family. NR3 subfamily. Binds DNA as a homodimer. Can form a heterodimer with ER-beta.

It is found in the nucleus. In terms of biological role, the steroid hormones and their receptors are involved in the regulation of eukaryotic gene expression and affect cellular proliferation and differentiation in target tissues. This chain is Estrogen receptor (esr1), found in Danio rerio (Zebrafish).